Reading from the N-terminus, the 474-residue chain is Protein anachronism (474 aa).

Residues 1–33 form the signal peptide; the sequence is MASAMRGEKCERSRIRELVLILSLITMAGDSRA. N-linked (GlcNAc...) asparagine glycosylation is found at Asn54, Asn62, Asn73, Asn116, and Asn144. The interval 173-195 is disordered; the sequence is NPGQTREHNPGQASTQPISTENP. The span at 183–195 shows a compositional bias: polar residues; that stretch reads GQASTQPISTENP. Asn342 is a glycosylation site (N-linked (GlcNAc...) asparagine). Polar residues predominate over residues 359–372; sequence FIESTTSNSPTIDN. Residues 359–474 are disordered; the sequence is FIESTTSNSP…HHRIPAHKQE (116 aa). Basic residues-rich tracts occupy residues 390–400 and 437–474; these read LVHHRRHHHNH and NHHR…HKQE.

Synthesized in some glial cells and secreted.

It localises to the secreted. In terms of biological role, negatively regulates proliferation of neuronal precursor cells, thereby controlling the timing of postembryonic neurogenesis. This Drosophila melanogaster (Fruit fly) protein is Protein anachronism (ana).